The chain runs to 380 residues: GDP-mannose:cellobiosyl-diphosphopolyprenol alpha-mannosyltransferase (380 aa).

It belongs to the glycosyltransferase group 1 family. Glycosyltransferase 4 subfamily.

It catalyses the reaction beta-D-Glc-(1-&gt;4)-alpha-D-Glc-di-trans,octa-cis-undecaprenyl diphosphate + GDP-alpha-D-mannose = alpha-D-Man-(1-&gt;3)-beta-D-Glc-(1-&gt;4)-alpha-D-Glc-1-di-trans,octa-cis-undecaprenyl diphosphate + GDP + H(+). In terms of biological role, involved in the biosynthesis of the exopolysaccharide xanthan, a polymer that is comprised of repeating pentasaccharide units with the structure of a beta-(1,4)-linked D-glucose backbone with trisaccharide side chains composed of mannose-beta-(1,4)-glucuronic acid-beta-(1,2)-mannose attached to alternate glucose residues in the backbone by alpha-(1,3) linkages. Xanthan is involved in pathogenicity but has also been used in a variety of applications as a specialty polymer for commercial applications, including food additives, where they act as viscosifying, stabilizing, emulsifying, or gelling agents. The sequence is that of GDP-mannose:cellobiosyl-diphosphopolyprenol alpha-mannosyltransferase (gumH) from Xanthomonas oryzae pv. oryzae (strain PXO99A).